We begin with the raw amino-acid sequence, 392 residues long: Gastricsin (392 aa).

Residues 1–16 (MKWMVVALLCLPLLEA) form the signal peptide. A propeptide spans 17-62 (SLLRVPLRKMKSIRETMKEQGVLKDFLKTHKYDPGQKYHFGNFGDY) (activation peptide). Positions 76-389 (YFGEISIGTP…DMGNNKVGLA (314 aa)) constitute a Peptidase A1 domain. Asp94 is an active-site residue. Cystine bridges form between Cys107/Cys112 and Cys270/Cys275. Asp280 is an active-site residue. An intrachain disulfide couples Cys314 to Cys347.

Belongs to the peptidase A1 family.

The protein resides in the secreted. The catalysed reaction is More restricted specificity than pepsin A, but shows preferential cleavage at Tyr-|-Xaa bonds. High activity on hemoglobin.. In terms of biological role, hydrolyzes a variety of proteins. In Rattus norvegicus (Rat), this protein is Gastricsin (Pgc).